The chain runs to 495 residues: Aspartyl/glutamyl-tRNA(Asn/Gln) amidotransferase subunit B (495 aa).

This sequence belongs to the GatB/GatE family. GatB subfamily. Heterotrimer of A, B and C subunits.

It catalyses the reaction L-glutamyl-tRNA(Gln) + L-glutamine + ATP + H2O = L-glutaminyl-tRNA(Gln) + L-glutamate + ADP + phosphate + H(+). The catalysed reaction is L-aspartyl-tRNA(Asn) + L-glutamine + ATP + H2O = L-asparaginyl-tRNA(Asn) + L-glutamate + ADP + phosphate + 2 H(+). Its function is as follows. Allows the formation of correctly charged Asn-tRNA(Asn) or Gln-tRNA(Gln) through the transamidation of misacylated Asp-tRNA(Asn) or Glu-tRNA(Gln) in organisms which lack either or both of asparaginyl-tRNA or glutaminyl-tRNA synthetases. The reaction takes place in the presence of glutamine and ATP through an activated phospho-Asp-tRNA(Asn) or phospho-Glu-tRNA(Gln). This chain is Aspartyl/glutamyl-tRNA(Asn/Gln) amidotransferase subunit B, found in Methanosarcina mazei (strain ATCC BAA-159 / DSM 3647 / Goe1 / Go1 / JCM 11833 / OCM 88) (Methanosarcina frisia).